The sequence spans 428 residues: Gamma-glutamyl phosphate reductase (428 aa).

It belongs to the gamma-glutamyl phosphate reductase family.

Its subcellular location is the cytoplasm. The enzyme catalyses L-glutamate 5-semialdehyde + phosphate + NADP(+) = L-glutamyl 5-phosphate + NADPH + H(+). The protein operates within amino-acid biosynthesis; L-proline biosynthesis; L-glutamate 5-semialdehyde from L-glutamate: step 2/2. Catalyzes the NADPH-dependent reduction of L-glutamate 5-phosphate into L-glutamate 5-semialdehyde and phosphate. The product spontaneously undergoes cyclization to form 1-pyrroline-5-carboxylate. The polypeptide is Gamma-glutamyl phosphate reductase (Chelativorans sp. (strain BNC1)).